Consider the following 257-residue polypeptide: Synaptosomal-associated protein 29 (257 aa).

The disordered stretch occupies residues 1–42 (MSGYPKSYNPFDDDVEDEDTRPAPWKDARDLPDGPDPPIDRQ). Positions 20–32 (TRPAPWKDARDLP) are enriched in basic and acidic residues. A phosphoserine mark is found at serine 77, serine 78, serine 114, serine 163, serine 181, serine 203, and serine 209. The 63-residue stretch at 195–257 (RAYHQKIDSN…KSTEKKVRQL (63 aa)) folds into the t-SNARE coiled-coil homology domain.

It belongs to the SNAP-25 family. As to quaternary structure, forms a SNARE complex, composed of VAMP8, SNAP29 and STX17, involved in fusion of autophagosome with lysosome. Interacts with multiple syntaxins including STX6. Interacts with EIPR1. Interacts with STX17; this interaction is increased in the absence of TMEM39A. As to expression, widely expressed.

The protein localises to the cytoplasm. The protein resides in the golgi apparatus membrane. It is found in the cytoplasmic vesicle. It localises to the autophagosome membrane. Its subcellular location is the cell projection. The protein localises to the cilium membrane. SNAREs, soluble N-ethylmaleimide-sensitive factor-attachment protein receptors, are essential proteins for fusion of cellular membranes. SNAREs localized on opposing membranes assemble to form a trans-SNARE complex, an extended, parallel four alpha-helical bundle that drives membrane fusion. SNAP29 is a SNARE involved in autophagy through the direct control of autophagosome membrane fusion with the lysososome membrane. Also plays a role in ciliogenesis by regulating membrane fusions. The sequence is that of Synaptosomal-associated protein 29 from Rattus norvegicus (Rat).